The following is a 302-amino-acid chain: Sulfate adenylyltransferase subunit 2 (302 aa).

It belongs to the PAPS reductase family. CysD subfamily. As to quaternary structure, heterodimer composed of CysD, the smaller subunit, and CysN.

The catalysed reaction is sulfate + ATP + H(+) = adenosine 5'-phosphosulfate + diphosphate. Its pathway is sulfur metabolism; hydrogen sulfide biosynthesis; sulfite from sulfate: step 1/3. Functionally, with CysN forms the ATP sulfurylase (ATPS) that catalyzes the adenylation of sulfate producing adenosine 5'-phosphosulfate (APS) and diphosphate, the first enzymatic step in sulfur assimilation pathway. APS synthesis involves the formation of a high-energy phosphoric-sulfuric acid anhydride bond driven by GTP hydrolysis by CysN coupled to ATP hydrolysis by CysD. The polypeptide is Sulfate adenylyltransferase subunit 2 (Yersinia pestis bv. Antiqua (strain Nepal516)).